Consider the following 395-residue polypeptide: Leukosialin (395 aa).

The N-terminal stretch at 1–19 (MALHLLLLFGACWVQVASP) is a signal peptide. Over 20-248 (DSLQRTTMLP…TRSPSQESSG (229 aa)) the chain is Extracellular. Residues 27–56 (MLPSTPHITAPSTSEAQNASPSVSVGSGTV) show a composition bias toward polar residues. The disordered stretch occupies residues 27–245 (MLPSTPHITA…PITTRSPSQE (219 aa)). The span at 73 to 88 (SLTPLETTELSSLETS) shows a compositional bias: low complexity. 2 stretches are compositionally biased toward polar residues: residues 89-111 (AGAS…SKTS) and 145-154 (TAASTSISKG). A compositionally biased stretch (low complexity) spans 155–166 (TSAPPTTVTTSS). Asn167 is a glycosylation site (N-linked (GlcNAc...) asparagine). The segment covering 167 to 196 (NETSGPSVATTVSSKTSGPPVTTATGSLGP) has biased composition (polar residues). The segment covering 205–241 (ATTATSSVESSSVARGTSVSSRKTSTTSTQDPITTRS) has biased composition (low complexity). The helical transmembrane segment at 249–271 (MLLVPMLIALVVVLALVALLLLW) threads the bilayer. The segment at 272 to 302 (RQRQKRRTGALTLSGGGKRNGVVDAWAGPAR) is required for interaction with EZR, MSN and RDX and for co-localization to microvilli. Residues 272-395 (RQRQKRRTGA…AKDEAAPQSL (124 aa)) are Cytoplasmic-facing. A Nuclear localization signal motif is present at residues 276-290 (KRRTGALTLSGGGKR). Residues Ser285 and Ser328 each carry the phosphoserine modification. Positions 303–395 (VPDEEATTTS…AKDEAAPQSL (93 aa)) are disordered. Positions 327–338 (GSGQRPTLTTFF) are enriched in polar residues. Thr333 carries the post-translational modification Phosphothreonine. 2 positions are modified to phosphoserine: Ser339 and Ser343. The residue at position 347 (Ser347) is a Phosphoserine; by PKC/PRKCQ. Ser371 is modified (phosphoserine). The residue at position 378 (Thr378) is a Phosphothreonine. Basic and acidic residues predominate over residues 385 to 395 (QAKDEAAPQSL).

Interacts with SIGLEC1. As to quaternary structure, interacts with isoform 2 of HIPK2. Interacts with CTNNB1. Interacts with RDX (via FERM domain). Interacts with EZR. Interacts with MSN. In terms of processing, phosphorylation at Ser-347 is regulated by chemokines, requires its association with ERM proteins (EZR, RDX and MSN) and is essential for its function in the regulation of T-cell trafficking to lymph nodes. Has a high content of sialic acid and O-linked carbohydrate structures. Post-translationally, cleavage by CTSG releases its extracellular domain and triggers its intramembrane proteolysis by gamma-secretase releasing the CD43 cytoplasmic tail chain (CD43-ct) which translocates to the nucleus. In terms of processing, sumoylated. In terms of tissue distribution, cell surface of thymocytes, T-lymphocytes, neutrophils, plasma cells and myelomas.

The protein localises to the membrane. The protein resides in the cell projection. Its subcellular location is the microvillus. It localises to the uropodium. It is found in the nucleus. The protein localises to the PML body. Its function is as follows. Predominant cell surface sialoprotein of leukocytes which regulates multiple T-cell functions, including T-cell activation, proliferation, differentiation, trafficking and migration. Positively regulates T-cell trafficking to lymph-nodes via its association with ERM proteins (EZR, RDX and MSN). Negatively regulates Th2 cell differentiation and predisposes the differentiation of T-cells towards a Th1 lineage commitment. Promotes the expression of IFN-gamma by T-cells during T-cell receptor (TCR) activation of naive cells and induces the expression of IFN-gamma by CD4(+) T-cells and to a lesser extent by CD8(+) T-cells. Plays a role in preparing T-cells for cytokine sensing and differentiation into effector cells by inducing the expression of cytokine receptors IFNGR and IL4R, promoting IFNGR and IL4R signaling and by mediating the clustering of IFNGR with TCR. Acts as a major E-selectin ligand responsible for Th17 cell rolling on activated vasculature and recruitment during inflammation. Mediates Th17 cells, but not Th1 cells, adhesion to E-selectin. Acts as a T-cell counter-receptor for SIGLEC1. Functionally, protects cells from apoptotic signals, promoting cell survival. The sequence is that of Leukosialin (Spn) from Mus musculus (Mouse).